Here is a 121-residue protein sequence, read N- to C-terminus: NAD(P)H-quinone oxidoreductase subunit M (121 aa).

It belongs to the complex I NdhM subunit family. NDH-1 can be composed of about 15 different subunits; different subcomplexes with different compositions have been identified which probably have different functions.

Its subcellular location is the cellular thylakoid membrane. It carries out the reaction a plastoquinone + NADH + (n+1) H(+)(in) = a plastoquinol + NAD(+) + n H(+)(out). It catalyses the reaction a plastoquinone + NADPH + (n+1) H(+)(in) = a plastoquinol + NADP(+) + n H(+)(out). In terms of biological role, NDH-1 shuttles electrons from an unknown electron donor, via FMN and iron-sulfur (Fe-S) centers, to quinones in the respiratory and/or the photosynthetic chain. The immediate electron acceptor for the enzyme in this species is believed to be plastoquinone. Couples the redox reaction to proton translocation, and thus conserves the redox energy in a proton gradient. Cyanobacterial NDH-1 also plays a role in inorganic carbon-concentration. This chain is NAD(P)H-quinone oxidoreductase subunit M, found in Synechococcus sp. (strain JA-3-3Ab) (Cyanobacteria bacterium Yellowstone A-Prime).